A 149-amino-acid polypeptide reads, in one-letter code: Protein K7 (149 aa).

This sequence belongs to the orthopoxvirus OPG044 family. Interacts with DDX3; this interaction inhibits DDX3 and suppresses DDX3-mediated IFN-beta promoter induction. Interacts with TRAF6 and IRAK2; these interactions suppress TLR-dependent NF-KappaB activation.

The protein localises to the host cytoplasm. Functionally, virulence factor that affects the acute immune response to infection. Bcl-2-like protein which, through its interaction with the DEAD box RNA helicase DDX3X/DDX3, prevents TBK1/IKKepsilon-mediated IRF3 activation. Contributes to virulence by binding to the host TRAF6 and IRAK2 and preventing host NF-kappa-B activation. This chain is Protein K7 (OPG044), found in Cynomys gunnisoni (Gunnison's prairie dog).